The sequence spans 132 residues: Large-conductance mechanosensitive channel (132 aa).

A run of 3 helical transmembrane segments spans residues 14-34 (VVDL…VSSL), 38-58 (IITP…LHFG), and 67-87 (GNFI…FMFV).

This sequence belongs to the MscL family. As to quaternary structure, homopentamer.

The protein resides in the cell membrane. Its function is as follows. Channel that opens in response to stretch forces in the membrane lipid bilayer. May participate in the regulation of osmotic pressure changes within the cell. In Bacillus cereus (strain ATCC 10987 / NRS 248), this protein is Large-conductance mechanosensitive channel.